A 337-amino-acid chain; its full sequence is Heme A synthase (337 aa).

Transmembrane regions (helical) follow at residues 6–26 (ITKWLFISCIMVIAMIVIGGI), 93–113 (GRITALIYIVPLIYFYFKDVI), 118–138 (ILPYIIALLLFCVQGFMGWYM), 154–174 (LAFHLIIAVIIYHILFYQLIK), and 192–212 (LIFSGIAITVIYVQIFLGAMV). H256 provides a ligand contact to heme. Helical transmembrane passes span 258-278 (LGGYSVFLVVVVLVICLLKIE), 285-305 (IAYFLMIALLMQISTGIITLL), and 308-328 (VPIIIASIHQLFAIILLSIII). H316 is a binding site for heme.

It belongs to the COX15/CtaA family. Type 2 subfamily. Interacts with CtaB. It depends on heme b as a cofactor.

It is found in the cell membrane. It carries out the reaction Fe(II)-heme o + 2 A + H2O = Fe(II)-heme a + 2 AH2. The protein operates within porphyrin-containing compound metabolism; heme A biosynthesis; heme A from heme O: step 1/1. Its function is as follows. Catalyzes the conversion of heme O to heme A by two successive hydroxylations of the methyl group at C8. The first hydroxylation forms heme I, the second hydroxylation results in an unstable dihydroxymethyl group, which spontaneously dehydrates, resulting in the formyl group of heme A. The polypeptide is Heme A synthase (Rickettsia felis (strain ATCC VR-1525 / URRWXCal2) (Rickettsia azadi)).